Reading from the N-terminus, the 220-residue chain is Pyridoxine/pyridoxamine 5'-phosphate oxidase (220 aa).

Substrate contacts are provided by residues 8-11 and Lys-66; that span reads RKSY. FMN is bound by residues 61 to 66, 76 to 77, Arg-82, and Lys-83; these read RVVLIK and FT. 3 residues coordinate substrate: Tyr-123, Arg-127, and Ser-131. FMN contacts are provided by residues 140-141 and Trp-184; that span reads QS. 190–192 is a binding site for substrate; sequence RLH. Arg-194 lines the FMN pocket.

The protein belongs to the pyridoxamine 5'-phosphate oxidase family. Homodimer. It depends on FMN as a cofactor.

The enzyme catalyses pyridoxamine 5'-phosphate + O2 + H2O = pyridoxal 5'-phosphate + H2O2 + NH4(+). The catalysed reaction is pyridoxine 5'-phosphate + O2 = pyridoxal 5'-phosphate + H2O2. The protein operates within cofactor metabolism; pyridoxal 5'-phosphate salvage; pyridoxal 5'-phosphate from pyridoxamine 5'-phosphate: step 1/1. It functions in the pathway cofactor metabolism; pyridoxal 5'-phosphate salvage; pyridoxal 5'-phosphate from pyridoxine 5'-phosphate: step 1/1. In terms of biological role, catalyzes the oxidation of either pyridoxine 5'-phosphate (PNP) or pyridoxamine 5'-phosphate (PMP) into pyridoxal 5'-phosphate (PLP). This is Pyridoxine/pyridoxamine 5'-phosphate oxidase from Albidiferax ferrireducens (strain ATCC BAA-621 / DSM 15236 / T118) (Rhodoferax ferrireducens).